Reading from the N-terminus, the 96-residue chain is MIDREQVRKVALLARLELTPEEEEQFTTQLGSILDYVEQLNELDVSNVPPTARAIDVSNITREDNLQPYADREAILSSAPEQEGEFFKVPKILNAE.

This sequence belongs to the GatC family. Heterotrimer of A, B and C subunits.

The catalysed reaction is L-glutamyl-tRNA(Gln) + L-glutamine + ATP + H2O = L-glutaminyl-tRNA(Gln) + L-glutamate + ADP + phosphate + H(+). The enzyme catalyses L-aspartyl-tRNA(Asn) + L-glutamine + ATP + H2O = L-asparaginyl-tRNA(Asn) + L-glutamate + ADP + phosphate + 2 H(+). In terms of biological role, allows the formation of correctly charged Asn-tRNA(Asn) or Gln-tRNA(Gln) through the transamidation of misacylated Asp-tRNA(Asn) or Glu-tRNA(Gln) in organisms which lack either or both of asparaginyl-tRNA or glutaminyl-tRNA synthetases. The reaction takes place in the presence of glutamine and ATP through an activated phospho-Asp-tRNA(Asn) or phospho-Glu-tRNA(Gln). The protein is Glutamyl-tRNA(Gln) amidotransferase subunit C of Nostoc sp. (strain PCC 7120 / SAG 25.82 / UTEX 2576).